The following is a 442-amino-acid chain: ATP-dependent protease ATPase subunit HslU (442 aa).

ATP-binding positions include isoleucine 18, 60–65, aspartate 255, glutamate 320, and arginine 392; that span reads GVGKTE.

This sequence belongs to the ClpX chaperone family. HslU subfamily. A double ring-shaped homohexamer of HslV is capped on each side by a ring-shaped HslU homohexamer. The assembly of the HslU/HslV complex is dependent on binding of ATP.

The protein resides in the cytoplasm. Functionally, ATPase subunit of a proteasome-like degradation complex; this subunit has chaperone activity. The binding of ATP and its subsequent hydrolysis by HslU are essential for unfolding of protein substrates subsequently hydrolyzed by HslV. HslU recognizes the N-terminal part of its protein substrates and unfolds these before they are guided to HslV for hydrolysis. This is ATP-dependent protease ATPase subunit HslU from Aeromonas hydrophila subsp. hydrophila (strain ATCC 7966 / DSM 30187 / BCRC 13018 / CCUG 14551 / JCM 1027 / KCTC 2358 / NCIMB 9240 / NCTC 8049).